The primary structure comprises 312 residues: uncharacterized protein (312 aa).

The protein resides in the mitochondrion. This is an uncharacterized protein from Schizosaccharomyces pombe (strain 972 / ATCC 24843) (Fission yeast).